A 79-amino-acid chain; its full sequence is Putative membrane protein insertion efficiency factor (79 aa).

The protein belongs to the UPF0161 family.

Its subcellular location is the cell inner membrane. Could be involved in insertion of integral membrane proteins into the membrane. The polypeptide is Putative membrane protein insertion efficiency factor (Prochlorococcus marinus (strain NATL2A)).